A 90-amino-acid chain; its full sequence is Protein Z600 (90 aa).

Thr-22 and Thr-48 each carry phosphothreonine. The interval 46–65 (PATPSSSGHGKFQTELKKRR) is disordered.

As to quaternary structure, component of the Frs-CycA-Cdk1 complex composed of Z600, CycA and Cdk1. Interacts preferentially with CycA (via C-terminus) but is also able to interact (via C-terminus) with CycE (via C-terminus).

The protein resides in the nucleus. Cell cycle regulator that is involved in modulating and adjusting cell proliferation according to the requirements of the developmental program. Interacts with mitotic Cdk1-cyclin complexes to inhibit mitotic entry at the G2/M transition. Likely to function by binding to the hydrophobic patch of cyclins to interfere with the interaction between the complex and certain Cdk1 substrates. At the mid-blastula transition, involved in the cell cycle arrest in G2 of cycle 14 by delaying mitosis and thus reducing cell proliferation allowing cell fate specification and morphogenesis to take place. Acts downstream or in parallel to the checkpoint regulator grp which is also required for the cell cycle pause at cycle 14. During gastrulation, delays mitosis in the ventral region of the embryonic mesoderm thus allowing invagination to be completed before cell division takes place. The polypeptide is Protein Z600 (Drosophila melanogaster (Fruit fly)).